The sequence spans 604 residues: Complement factor I (604 aa).

An N-terminal signal peptide occupies residues 1 to 18; it reads MKLALLILLLLNPHLSSS. Intrachain disulfides connect cysteine 36-cysteine 260, cysteine 46-cysteine 57, cysteine 51-cysteine 62, cysteine 64-cysteine 96, cysteine 70-cysteine 89, cysteine 78-cysteine 109, cysteine 144-cysteine 186, cysteine 157-cysteine 219, cysteine 191-cysteine 201, cysteine 234-cysteine 252, cysteine 246-cysteine 261, cysteine 264-cysteine 276, cysteine 271-cysteine 289, cysteine 283-cysteine 298, cysteine 349-cysteine 474, cysteine 387-cysteine 403, cysteine 395-cysteine 465, cysteine 488-cysteine 552, cysteine 516-cysteine 531, and cysteine 542-cysteine 571. N-linked (GlcNAc...) asparagine glycosylation occurs at asparagine 40. Residues 58–111 enclose the Kazal-like domain; the sequence is IEGTCACKLPYQCPKAGTPVCATNGRGYPTYCHLKSFECLHPEIKFSNNGTCTA. N-linked (GlcNAc...) asparagine glycosylation is found at asparagine 106, asparagine 116, and asparagine 182. Positions 117 to 217 constitute an SRCR domain; it reads VSLIYGSTDT…SKAPHGLAGV (101 aa). LDL-receptor class A domains are found at residues 218–262 and 263–299; these read VCYT…LCCK and GCRG…SGCE. Ca(2+) is bound by residues lysine 244, aspartate 247, valine 249, aspartate 251, aspartate 257, and glutamate 258. Residues asparagine 284, glutamate 286, aspartate 288, aspartate 294, and glutamate 295 each contribute to the Ca(2+) site. Residues 362-595 form the Peptidase S1 domain; that stretch reads VVGGKPAEMG…YFDWISYYVG (234 aa). Active-site charge relay system residues include histidine 402 and aspartate 450. A glycan (N-linked (GlcNAc...) asparagine) is linked at asparagine 515. The active-site Charge relay system is serine 546. A glycan (N-linked (GlcNAc...) asparagine) is linked at asparagine 557.

It belongs to the peptidase S1 family. In terms of assembly, heterodimer of a light and heavy chains; disulfide-linked. The fully processed and mature protein circulates as a zymogen, and is allosterically activated by substrate-induced remodeling of the active site. Interacts with C3b. Interacts with complement factor H. As to expression, expressed in the liver by hepatocytes. Also present in other cells such as monocytes, fibroblasts or keratinocytes.

The protein resides in the secreted. It localises to the extracellular space. It catalyses the reaction Inactivates complement subcomponents C3b, iC3b and C4b by proteolytic cleavage.. Trypsin-like serine protease that plays an essential role in regulating the immune response by controlling all complement pathways. Inhibits these pathways by cleaving three peptide bonds in the alpha-chain of C3b and two bonds in the alpha-chain of C4b thereby inactivating these proteins. Essential cofactors for these reactions include factor H and C4BP in the fluid phase and membrane cofactor protein/CD46 and CR1 on cell surfaces. The presence of these cofactors on healthy cells allows degradation of deposited C3b by CFI in order to prevent undesired complement activation, while in apoptotic cells or microbes, the absence of such cofactors leads to C3b-mediated complement activation and subsequent opsonization. In Rattus norvegicus (Rat), this protein is Complement factor I (Cfi).